The sequence spans 238 residues: Ribonuclease PH (238 aa).

Residues R86 and 124–126 each bind phosphate; that span reads GTR.

The protein belongs to the RNase PH family. In terms of assembly, homohexameric ring arranged as a trimer of dimers.

It carries out the reaction tRNA(n+1) + phosphate = tRNA(n) + a ribonucleoside 5'-diphosphate. Functionally, phosphorolytic 3'-5' exoribonuclease that plays an important role in tRNA 3'-end maturation. Removes nucleotide residues following the 3'-CCA terminus of tRNAs; can also add nucleotides to the ends of RNA molecules by using nucleoside diphosphates as substrates, but this may not be physiologically important. Probably plays a role in initiation of 16S rRNA degradation (leading to ribosome degradation) during starvation. This is Ribonuclease PH from Haemophilus influenzae (strain 86-028NP).